The following is a 592-amino-acid chain: A-type ATP synthase subunit A (592 aa).

Residue 234–241 participates in ATP binding; that stretch reads GAFGTGKT.

This sequence belongs to the ATPase alpha/beta chains family. Has multiple subunits with at least A(3), B(3), C, D, E, F, H, I and proteolipid K(x).

The protein resides in the cell membrane. It carries out the reaction ATP + H2O + 4 H(+)(in) = ADP + phosphate + 5 H(+)(out). Functionally, component of the A-type ATP synthase that produces ATP from ADP in the presence of a proton gradient across the membrane. The A chain is the catalytic subunit. The chain is A-type ATP synthase subunit A from Nitrosopumilus maritimus (strain SCM1).